The sequence spans 154 residues: Myoglobin (154 aa).

Residues 2–148 (GLSDDEWNHV…FRNDMASKYK (147 aa)) enclose the Globin domain. His65 is a nitrite binding site. His65 serves as a coordination point for O2. His94 serves as a coordination point for heme b.

It belongs to the globin family. In terms of assembly, monomeric.

The protein resides in the cytoplasm. Its subcellular location is the sarcoplasm. The enzyme catalyses Fe(III)-heme b-[protein] + nitric oxide + H2O = Fe(II)-heme b-[protein] + nitrite + 2 H(+). It carries out the reaction H2O2 + AH2 = A + 2 H2O. Functionally, monomeric heme protein which primary function is to store oxygen and facilitate its diffusion within muscle tissues. Reversibly binds oxygen through a pentacoordinated heme iron and enables its timely and efficient release as needed during periods of heightened demand. Depending on the oxidative conditions of tissues and cells, and in addition to its ability to bind oxygen, it also has a nitrite reductase activity whereby it regulates the production of bioactive nitric oxide. Under stress conditions, like hypoxia and anoxia, it also protects cells against reactive oxygen species thanks to its pseudoperoxidase activity. The chain is Myoglobin (MB) from Caretta caretta (Loggerhead sea turtle).